We begin with the raw amino-acid sequence, 305 residues long: Serine/threonine-protein phosphatase 6 catalytic subunit (305 aa).

An N-acetylmethionine modification is found at Met-1. Residues Asp-53, His-55, Asp-81, and Asn-113 each contribute to the Mn(2+) site. The active-site Proton donor is His-114. His-163 and His-237 together coordinate Mn(2+).

This sequence belongs to the PPP phosphatase family. PP-6 (PP-V) subfamily. In terms of assembly, protein phosphatase 6 (PP6) holoenzyme is proposed to be a heterotrimeric complex formed by the catalytic subunit, a SAPS domain-containing subunit (PP6R) and an ankyrin repeat-domain containing regulatory subunit (ARS). Interacts with subunits PPP6R1, PPP6R2 and PPP6R3. Interacts with subunit ANKRD28. Interacts with IGBP1. Interacts with MAP3K7. Interacts with NFKBIE. Interacts with TRIM14 and WRNIP1; these interactions positively regulate the RIG-I signaling pathway. The cofactor is Mn(2+). Ubiquitously expressed in all tissues tested with strongest expression in lung, spleen, liver, kidney and brain. Weaker expression observed in bladder, pancreas, heart and skeletal muscle.

It is found in the mitochondrion. The protein localises to the cytoplasm. The catalysed reaction is O-phospho-L-seryl-[protein] + H2O = L-seryl-[protein] + phosphate. The enzyme catalyses O-phospho-L-threonyl-[protein] + H2O = L-threonyl-[protein] + phosphate. Catalytic subunit of protein phosphatase 6 (PP6). PP6 is a component of a signaling pathway regulating cell cycle progression in response to IL2 receptor stimulation. N-terminal domain restricts G1 to S phase progression in cancer cells, in part through control of cyclin D13 During mitosis, regulates spindle positioning. Down-regulates MAP3K7 kinase activation of the IL1 signaling pathway by dephosphorylation of MAP3K7. Acts as a regulator of innate immunity by mediating dephosphorylation CGAS, STING1 and RIGI. Also participates in the innate immune defense against viruses by desphosphorylating RIGI, an essential step that triggers RIGI-mediated signaling activation. Also regulates innate immunity by acting as a negative regulator of the cGAS-STING pathway: mediates dephosphorylation and inactivation of CGAS and STING1. CGAS dephosphorylation at 'Ser-420' impairs its ability to bind GTP, thereby inactivating it. This is Serine/threonine-protein phosphatase 6 catalytic subunit from Mus musculus (Mouse).